Consider the following 122-residue polypeptide: UPF0102 protein VV1_0590 (122 aa).

Belongs to the UPF0102 family.

The polypeptide is UPF0102 protein VV1_0590 (Vibrio vulnificus (strain CMCP6)).